Reading from the N-terminus, the 178-residue chain is ATP synthase subunit delta (178 aa).

This sequence belongs to the ATPase delta chain family. As to quaternary structure, F-type ATPases have 2 components, F(1) - the catalytic core - and F(0) - the membrane proton channel. F(1) has five subunits: alpha(3), beta(3), gamma(1), delta(1), epsilon(1). F(0) has three main subunits: a(1), b(2) and c(10-14). The alpha and beta chains form an alternating ring which encloses part of the gamma chain. F(1) is attached to F(0) by a central stalk formed by the gamma and epsilon chains, while a peripheral stalk is formed by the delta and b chains.

Its subcellular location is the cell membrane. Functionally, f(1)F(0) ATP synthase produces ATP from ADP in the presence of a proton or sodium gradient. F-type ATPases consist of two structural domains, F(1) containing the extramembraneous catalytic core and F(0) containing the membrane proton channel, linked together by a central stalk and a peripheral stalk. During catalysis, ATP synthesis in the catalytic domain of F(1) is coupled via a rotary mechanism of the central stalk subunits to proton translocation. This protein is part of the stalk that links CF(0) to CF(1). It either transmits conformational changes from CF(0) to CF(1) or is implicated in proton conduction. The protein is ATP synthase subunit delta of Streptococcus pyogenes serotype M2 (strain MGAS10270).